The primary structure comprises 565 residues: NAD-dependent malic enzyme (565 aa).

Y104 functions as the Proton donor in the catalytic mechanism. R157 is a binding site for NAD(+). The Proton acceptor role is filled by K175. E246, D247, and D270 together coordinate a divalent metal cation. NAD(+) is bound by residues D270 and N418.

This sequence belongs to the malic enzymes family. As to quaternary structure, homotetramer. It depends on Mg(2+) as a cofactor. Requires Mn(2+) as cofactor.

The catalysed reaction is (S)-malate + NAD(+) = pyruvate + CO2 + NADH. It carries out the reaction oxaloacetate + H(+) = pyruvate + CO2. The polypeptide is NAD-dependent malic enzyme (Enterobacter sp. (strain 638)).